The sequence spans 534 residues: Zinc finger protein 397 (534 aa).

A Phosphoserine modification is found at S31. In terms of domain architecture, SCAN box spans 50–132 (RQQFRKFCYQ…TLLEDLEREF (83 aa)). Residues K55, K171, K202, and K252 each participate in a glycyl lysine isopeptide (Lys-Gly) (interchain with G-Cter in SUMO2) cross-link. The interval 197-242 (DISGEKSQRLSQEPSFGGFSEHKSSLEWQQGSAPGETLRRSPSQRA) is disordered. 9 C2H2-type zinc fingers span residues 285 to 307 (YRCD…QRIH), 313 to 335 (YKCN…QRIH), 341 to 363 (YECS…RKIH), 369 to 391 (CKCN…QRIH), 397 to 419 (YECN…QRIH), 425 to 447 (YECN…QRIH), 453 to 475 (YECN…QRIH), 481 to 503 (YQCN…QRIH), and 509 to 531 (YICS…QRVH).

The protein belongs to the krueppel C2H2-type zinc-finger protein family.

The protein resides in the nucleus. DNA-dependent transcriptional repressor. This is Zinc finger protein 397 (ZNF397) from Bos taurus (Bovine).